The chain runs to 476 residues: Bifunctional protein HldE (476 aa).

The ribokinase stretch occupies residues 1-319; that stretch reads MKVSLPAFEK…EALALHHGES (319 aa). Residue 195–198 coordinates ATP; that stretch reads NMSE. Asp-264 is a catalytic residue. The segment at 345–476 is cytidylyltransferase; that stretch reads MTNGCFDILH…AIIQNIMAKQ (132 aa).

This sequence in the N-terminal section; belongs to the carbohydrate kinase PfkB family. In the C-terminal section; belongs to the cytidylyltransferase family. In terms of assembly, homodimer.

The enzyme catalyses D-glycero-beta-D-manno-heptose 7-phosphate + ATP = D-glycero-beta-D-manno-heptose 1,7-bisphosphate + ADP + H(+). It catalyses the reaction D-glycero-beta-D-manno-heptose 1-phosphate + ATP + H(+) = ADP-D-glycero-beta-D-manno-heptose + diphosphate. It functions in the pathway nucleotide-sugar biosynthesis; ADP-L-glycero-beta-D-manno-heptose biosynthesis; ADP-L-glycero-beta-D-manno-heptose from D-glycero-beta-D-manno-heptose 7-phosphate: step 1/4. The protein operates within nucleotide-sugar biosynthesis; ADP-L-glycero-beta-D-manno-heptose biosynthesis; ADP-L-glycero-beta-D-manno-heptose from D-glycero-beta-D-manno-heptose 7-phosphate: step 3/4. In terms of biological role, catalyzes the phosphorylation of D-glycero-D-manno-heptose 7-phosphate at the C-1 position to selectively form D-glycero-beta-D-manno-heptose-1,7-bisphosphate. Functionally, catalyzes the ADP transfer from ATP to D-glycero-beta-D-manno-heptose 1-phosphate, yielding ADP-D-glycero-beta-D-manno-heptose. The chain is Bifunctional protein HldE from Shewanella sp. (strain MR-4).